The chain runs to 430 residues: Adenylosuccinate synthetase (430 aa).

GTP-binding positions include Gly-12 to Lys-18 and Gly-40 to Thr-42. Catalysis depends on Asp-13, which acts as the Proton acceptor. Mg(2+) is bound by residues Asp-13 and Gly-40. IMP contacts are provided by residues Asp-13–Lys-16, Asn-38–His-41, Thr-128, Arg-142, Gln-223, Thr-238, and Arg-302. His-41 (proton donor) is an active-site residue. Thr-298–Arg-304 lines the substrate pocket. GTP is bound by residues Arg-304, Ser-330–Asp-332, and Ser-412–Gly-414.

The protein belongs to the adenylosuccinate synthetase family. In terms of assembly, homodimer. It depends on Mg(2+) as a cofactor.

It localises to the cytoplasm. It carries out the reaction IMP + L-aspartate + GTP = N(6)-(1,2-dicarboxyethyl)-AMP + GDP + phosphate + 2 H(+). It participates in purine metabolism; AMP biosynthesis via de novo pathway; AMP from IMP: step 1/2. Functionally, plays an important role in the de novo pathway of purine nucleotide biosynthesis. Catalyzes the first committed step in the biosynthesis of AMP from IMP. The sequence is that of Adenylosuccinate synthetase from Bacillus licheniformis (strain ATCC 14580 / DSM 13 / JCM 2505 / CCUG 7422 / NBRC 12200 / NCIMB 9375 / NCTC 10341 / NRRL NRS-1264 / Gibson 46).